The sequence spans 379 residues: MYHPQCELLMPLESLEMDVGQSHLAAAVAAAMPGELNFHLLHSLDAAAAAASSTAASASSQPTVDYFFGGADQQPPPPAAMQYDQLAAPHHHQTVAMLRDYYGGHYPPAAAAAAATEAYFRGGPRTAGSSSLVFGPADDESAFMVGPFESSPTPRSGGGRKRSRATAGFHGGGPANGVEKKEKQRRLRLTEKYNALMLLIPNRTKEDRATVISDAIEYIQELGRTVEELTLLVEKKRRRREMQGDVVDAATSSVVAGMDQAAESSEGEVMAAAAMGAVAPPPRQAPIRSTYIQRRSKETFVDVRIVEDDVNIKLTKRRRDGCLAAASRALDDLRLDLVHLSGGKIGDCHIYMFNTKIHSGSPVFASAVASRLIEVVDEY.

Positions 144–184 are disordered; it reads MVGPFESSPTPRSGGGRKRSRATAGFHGGGPANGVEKKEKQ. A basic motif; degenerate region spans residues 173 to 186; sequence GPANGVEKKEKQRR. The 50-residue stretch at 173–222 folds into the bHLH domain; that stretch reads GPANGVEKKEKQRRLRLTEKYNALMLLIPNRTKEDRATVISDAIEYIQEL. The segment at 187-222 is helix-loop-helix motif; it reads LRLTEKYNALMLLIPNRTKEDRATVISDAIEYIQEL.

This sequence belongs to the bHLH protein family. As to quaternary structure, homodimer. Interacts with TDR, but not with EAT1. Highly expressed in anthers; strong expression in the middle layer and tapetum, and weak expression in the endothecium.

It localises to the nucleus. In terms of biological role, transcription factor that binds to the E-box-containing promoter regions of the transcription factors TDR and EAT1, activating their expression. May have a role in specifying the cell pattern of the inner anther walls and functioning in meiosis progression. Required for male reproduction. Acts downstream of UDT1 and GAMYB, but upstream of TDR1 and EAT1 in pollen development. The sequence is that of Transcription factor TIP2 (TIP2) from Oryza sativa subsp. japonica (Rice).